The primary structure comprises 496 residues: Lysine--tRNA ligase (496 aa).

Mg(2+) is bound by residues Glu-408 and Glu-415.

It belongs to the class-II aminoacyl-tRNA synthetase family. In terms of assembly, homodimer. Requires Mg(2+) as cofactor.

It localises to the cytoplasm. The catalysed reaction is tRNA(Lys) + L-lysine + ATP = L-lysyl-tRNA(Lys) + AMP + diphosphate. This Legionella pneumophila (strain Corby) protein is Lysine--tRNA ligase.